The primary structure comprises 449 residues: Nuclear hormone receptor family member nhr-43 (449 aa).

The nuclear receptor DNA-binding region spans 44–122; sequence NIHCRVCERR…VGLNVDAVVG (79 aa). NR C4-type zinc fingers lie at residues 47–68 and 84–105; these read CRVC…CRAC and CRRG…CQKC. Basic and acidic residues predominate over residues 125 to 142; the sequence is SPDHVKTTSRDESVKKED. The interval 125–154 is disordered; sequence SPDHVKTTSRDESVKKEDEESDTGSEGKSC. The region spanning 200-449 is the NR LBD domain; the sequence is NYNEFTKSRL…SDLNAYLYSI (250 aa).

It is found in the nucleus. Functionally, ligand-activated transcription factor. Positively modulates expression of homeobox protein lin-39, perhaps by binding to the sequence motif 5'-TGAC-3' in regulatory regions of the lin-39 gene, acting in the embryo, and also in the vulval lineage. This chain is Nuclear hormone receptor family member nhr-43, found in Caenorhabditis elegans.